The following is a 198-amino-acid chain: Recombination protein RecR (198 aa).

Residues 57–72 (CSICGNLTDQDPCAIC) form a C4-type zinc finger. A Toprim domain is found at 80–175 (STILIVEDSR…KVTRLARGLA (96 aa)).

This sequence belongs to the RecR family.

In terms of biological role, may play a role in DNA repair. It seems to be involved in an RecBC-independent recombinational process of DNA repair. It may act with RecF and RecO. The polypeptide is Recombination protein RecR (Streptococcus suis (strain 05ZYH33)).